The chain runs to 548 residues: Chaperonin GroEL 1 (548 aa).

ATP contacts are provided by residues 30–33 (TLGP), lysine 51, 87–91 (DGTTT), glycine 415, 479–481 (NAA), and aspartate 495.

The protein belongs to the chaperonin (HSP60) family. Forms a cylinder of 14 subunits composed of two heptameric rings stacked back-to-back. Interacts with the co-chaperonin GroES.

It localises to the cytoplasm. The enzyme catalyses ATP + H2O + a folded polypeptide = ADP + phosphate + an unfolded polypeptide.. In terms of biological role, together with its co-chaperonin GroES, plays an essential role in assisting protein folding. The GroEL-GroES system forms a nano-cage that allows encapsulation of the non-native substrate proteins and provides a physical environment optimized to promote and accelerate protein folding. This chain is Chaperonin GroEL 1, found in Vibrio harveyi (Beneckea harveyi).